A 139-amino-acid chain; its full sequence is Small ribosomal subunit protein bS16 (139 aa).

The interval 85–108 (ESKSGKKPAKKATTKEASAKKPTD) is disordered. Residues 97–108 (TTKEASAKKPTD) show a composition bias toward basic and acidic residues.

This sequence belongs to the bacterial ribosomal protein bS16 family.

The chain is Small ribosomal subunit protein bS16 from Leuconostoc mesenteroides subsp. mesenteroides (strain ATCC 8293 / DSM 20343 / BCRC 11652 / CCM 1803 / JCM 6124 / NCDO 523 / NBRC 100496 / NCIMB 8023 / NCTC 12954 / NRRL B-1118 / 37Y).